We begin with the raw amino-acid sequence, 158 residues long: Na(+)/H(+) antiporter subunit E (158 aa).

2 helical membrane passes run tyrosine 22–leucine 41 and isoleucine 54–isoleucine 76.

The protein belongs to the CPA3 antiporters (TC 2.A.63) subunit E family. As to quaternary structure, forms a heterooligomeric complex that consists of seven subunits: MrpA, MrpB, MrpC, MrpD, MrpE, MrpF and MrpG.

It is found in the cell membrane. Functionally, mnh complex is a Na(+)Li(+)/H(+) antiporter involved in Na(+) and/or Li(+) excretion and Na(+) resistance. Na(+)/H(+) antiport consumes a transmembrane electrical potential, and is thus inferred to be electrogenic. Does not transport K(+), Ca(2+) or Mg(2+). Its function is as follows. Mrp complex is a Na(+)/H(+) antiporter involved in Na(+) excretion and Na(+) resistance. In Alkalihalophilus pseudofirmus (strain ATCC BAA-2126 / JCM 17055 / OF4) (Bacillus pseudofirmus), this protein is Na(+)/H(+) antiporter subunit E (mrpE).